We begin with the raw amino-acid sequence, 82 residues long: Cytochrome b559 subunit alpha (82 aa).

A helical membrane pass occupies residues Val22–Phe36. His24 serves as a coordination point for heme.

It belongs to the PsbE/PsbF family. As to quaternary structure, heterodimer of an alpha subunit and a beta subunit. PSII is composed of 1 copy each of membrane proteins PsbA, PsbB, PsbC, PsbD, PsbE, PsbF, PsbH, PsbI, PsbJ, PsbK, PsbL, PsbM, PsbT, PsbX, PsbY, PsbZ, Psb30/Ycf12, peripheral proteins PsbO, CyanoQ (PsbQ), PsbU, PsbV and a large number of cofactors. It forms dimeric complexes. Heme b is required as a cofactor.

Its subcellular location is the cellular thylakoid membrane. This b-type cytochrome is tightly associated with the reaction center of photosystem II (PSII). PSII is a light-driven water:plastoquinone oxidoreductase that uses light energy to abstract electrons from H(2)O, generating O(2) and a proton gradient subsequently used for ATP formation. It consists of a core antenna complex that captures photons, and an electron transfer chain that converts photonic excitation into a charge separation. This chain is Cytochrome b559 subunit alpha, found in Synechococcus sp. (strain CC9605).